The primary structure comprises 248 residues: MLPEHHDHGHEHGGNGHGHGHRHQVNFDPTAAEPDPYGVAPRGGRAFRLGIGGPVGSGKTALTAALCRALGSEVNLAVVTNDIYTTEDADFLRRAGVLDTDRIEAVQTGACPHTAIRDDITANLDAVEKLEERHPGLELVIVESGGDNLTAVFSRGLADSQVFVVDVAGGDKVPRKGGPGVTTADLLVINKVDLAEQVGADMAVMVADAHRMRGELPVITQSLTRTPNAPDVSAWVRQQLAAGVVVGA.

The span at Met-1–Gly-14 shows a compositional bias: basic and acidic residues. Residues Met-1 to Pro-36 are disordered. Residue Gly-53–Thr-60 coordinates GTP.

Belongs to the SIMIBI class G3E GTPase family. UreG subfamily. Homodimer. UreD, UreF and UreG form a complex that acts as a GTP-hydrolysis-dependent molecular chaperone, activating the urease apoprotein by helping to assemble the nickel containing metallocenter of UreC. The UreE protein probably delivers the nickel.

Its subcellular location is the cytoplasm. Facilitates the functional incorporation of the urease nickel metallocenter. This process requires GTP hydrolysis, probably effectuated by UreG. The chain is Urease accessory protein UreG 1 from Saccharopolyspora erythraea (strain ATCC 11635 / DSM 40517 / JCM 4748 / NBRC 13426 / NCIMB 8594 / NRRL 2338).